We begin with the raw amino-acid sequence, 160 residues long: Aspartate 1-decarboxylase 2 (160 aa).

Residue Ser-25 is the Schiff-base intermediate with substrate; via pyruvic acid of the active site. Ser-25 is subject to Pyruvic acid (Ser). Thr-57 provides a ligand contact to substrate. The active-site Proton donor is Tyr-58. 73 to 75 (GAA) contributes to the substrate binding site.

The protein belongs to the PanD family. As to quaternary structure, heterooctamer of four alpha and four beta subunits. It depends on pyruvate as a cofactor. In terms of processing, is synthesized initially as an inactive proenzyme, which is activated by self-cleavage at a specific serine bond to produce a beta-subunit with a hydroxyl group at its C-terminus and an alpha-subunit with a pyruvoyl group at its N-terminus.

It localises to the cytoplasm. The catalysed reaction is L-aspartate + H(+) = beta-alanine + CO2. It participates in cofactor biosynthesis; (R)-pantothenate biosynthesis; beta-alanine from L-aspartate: step 1/1. In terms of biological role, catalyzes the pyruvoyl-dependent decarboxylation of aspartate to produce beta-alanine. The polypeptide is Aspartate 1-decarboxylase 2 (Frankia casuarinae (strain DSM 45818 / CECT 9043 / HFP020203 / CcI3)).